The sequence spans 118 residues: V-type proton ATPase subunit G 1 (118 aa).

Position 2 is an N-acetylalanine (Ala2).

Belongs to the V-ATPase G subunit family. V-ATPase is a heteromultimeric enzyme made up of two complexes: the ATP-hydrolytic V1 complex and the proton translocation V0 complex. The V1 complex consists of three catalytic AB heterodimers that form a heterohexamer, three peripheral stalks each consisting of EG heterodimers, one central rotor including subunits D and F, and the regulatory subunits C and H. The proton translocation complex V0 consists of the proton transport subunit a, a ring of proteolipid subunits c9c'', rotary subunit d, subunits e and f, and the accessory subunits ATP6AP1/Ac45 and ATP6AP2/PRR. In terms of tissue distribution, kidney; localizes to early distal nephron, encompassing thick ascending limbs and distal convoluted tubules (at protein level). Ubiquitous.

The protein localises to the apical cell membrane. Functionally, subunit of the V1 complex of vacuolar(H+)-ATPase (V-ATPase), a multisubunit enzyme composed of a peripheral complex (V1) that hydrolyzes ATP and a membrane integral complex (V0) that translocates protons. V-ATPase is responsible for acidifying and maintaining the pH of intracellular compartments and in some cell types, is targeted to the plasma membrane, where it is responsible for acidifying the extracellular environment. In aerobic conditions, involved in intracellular iron homeostasis, thus triggering the activity of Fe(2+) prolyl hydroxylase (PHD) enzymes, and leading to HIF1A hydroxylation and subsequent proteasomal degradation. This is V-type proton ATPase subunit G 1 (ATP6V1G1) from Homo sapiens (Human).